The sequence spans 238 residues: tRNA (guanine-N(7)-)-methyltransferase (238 aa).

Residues Glu-62, Glu-87, Asp-119, and Asp-141 each coordinate S-adenosyl-L-methionine. Residue Asp-141 is part of the active site. Residues Lys-145, Asp-177, and 216-219 (TRYE) contribute to the substrate site.

It belongs to the class I-like SAM-binding methyltransferase superfamily. TrmB family.

The enzyme catalyses guanosine(46) in tRNA + S-adenosyl-L-methionine = N(7)-methylguanosine(46) in tRNA + S-adenosyl-L-homocysteine. Its pathway is tRNA modification; N(7)-methylguanine-tRNA biosynthesis. Catalyzes the formation of N(7)-methylguanine at position 46 (m7G46) in tRNA. The protein is tRNA (guanine-N(7)-)-methyltransferase of Novosphingobium aromaticivorans (strain ATCC 700278 / DSM 12444 / CCUG 56034 / CIP 105152 / NBRC 16084 / F199).